Here is a 156-residue protein sequence, read N- to C-terminus: MKDLTHVDEKGVKMVEVGHKDVVFRKAVAKGRIRLKPETIELIKAGKTKKGNVIAAAQIAGILAVKKTPELIPLCHPIPLTGVDITFEFGDDYIEATCEVRAYYKTGVEMEALTGVSVALLTIWDMVKAVEKDENGQYPFTRIEDIRVVEKVKGEE.

Substrate contacts are provided by residues 74-76 and 110-111; these read LCH and ME. Asp125 is a catalytic residue.

The protein belongs to the MoaC family. Homohexamer; trimer of dimers.

It carries out the reaction (8S)-3',8-cyclo-7,8-dihydroguanosine 5'-triphosphate = cyclic pyranopterin phosphate + diphosphate. The protein operates within cofactor biosynthesis; molybdopterin biosynthesis. Its function is as follows. Catalyzes the conversion of (8S)-3',8-cyclo-7,8-dihydroguanosine 5'-triphosphate to cyclic pyranopterin monophosphate (cPMP). In Thermococcus kodakarensis (strain ATCC BAA-918 / JCM 12380 / KOD1) (Pyrococcus kodakaraensis (strain KOD1)), this protein is Probable cyclic pyranopterin monophosphate synthase.